Here is a 223-residue protein sequence, read N- to C-terminus: Lipoprotein-releasing system ATP-binding protein LolD (223 aa).

Positions 1-223 (MAKVFRSGST…DEVEPQSLPA (223 aa)) constitute an ABC transporter domain. 32-39 (GDSGSGKS) lines the ATP pocket.

Belongs to the ABC transporter superfamily. Lipoprotein translocase (TC 3.A.1.125) family. In terms of assembly, the complex is composed of two ATP-binding proteins (LolD) and two transmembrane proteins (LolC and LolE).

Its subcellular location is the cell inner membrane. Its function is as follows. Part of the ABC transporter complex LolCDE involved in the translocation of mature outer membrane-directed lipoproteins, from the inner membrane to the periplasmic chaperone, LolA. Responsible for the formation of the LolA-lipoprotein complex in an ATP-dependent manner. The sequence is that of Lipoprotein-releasing system ATP-binding protein LolD from Koribacter versatilis (strain Ellin345).